Reading from the N-terminus, the 719-residue chain is Probable disease resistance protein At4g14610 (719 aa).

Positions S25–L73 form a coiled coil. An NB-ARC domain is found at E114–P418. G156 to T163 serves as a coordination point for ATP. 3 LRR repeats span residues A400–P421, Q422–F444, and N447–V469.

It belongs to the disease resistance NB-LRR family.

Probable disease resistance protein. The sequence is that of Probable disease resistance protein At4g14610 from Arabidopsis thaliana (Mouse-ear cress).